A 380-amino-acid polypeptide reads, in one-letter code: Chaperone protein DnaJ (380 aa).

A J domain is found at 5 to 70; sequence DYYEVLGVER…SKRAAYDQYG (66 aa). A CR-type zinc finger spans residues 139-217; the sequence is GTNVNIRVPT…CHGEGRVEES (79 aa). Zn(2+)-binding residues include Cys152, Cys155, Cys169, Cys172, Cys191, Cys194, Cys205, and Cys208. CXXCXGXG motif repeat units lie at residues 152–159, 169–176, 191–198, and 205–212; these read CKPCDGSG, CPTCGGIG, CPRCHGHG, and CDSCHGEG. The tract at residues 224–245 is disordered; sequence VPPGVDTGDRIRLSGEGEAGTQ.

This sequence belongs to the DnaJ family. In terms of assembly, homodimer. Zn(2+) serves as cofactor.

It localises to the cytoplasm. Its function is as follows. Participates actively in the response to hyperosmotic and heat shock by preventing the aggregation of stress-denatured proteins and by disaggregating proteins, also in an autonomous, DnaK-independent fashion. Unfolded proteins bind initially to DnaJ; upon interaction with the DnaJ-bound protein, DnaK hydrolyzes its bound ATP, resulting in the formation of a stable complex. GrpE releases ADP from DnaK; ATP binding to DnaK triggers the release of the substrate protein, thus completing the reaction cycle. Several rounds of ATP-dependent interactions between DnaJ, DnaK and GrpE are required for fully efficient folding. Also involved, together with DnaK and GrpE, in the DNA replication of plasmids through activation of initiation proteins. This chain is Chaperone protein DnaJ, found in Pseudomonas syringae pv. syringae (strain B728a).